The following is a 636-amino-acid chain: Threonine--tRNA ligase (636 aa).

The region spanning 1 to 63 (MINITTSFPN…SKDGSVDPVT (63 aa)) is the TGS domain. Positions 244 to 535 (DHRKIAKDLG…LIEHYAGNIP (292 aa)) are catalytic. 3 residues coordinate Zn(2+): C335, H386, and H512.

Belongs to the class-II aminoacyl-tRNA synthetase family. Homodimer. Zn(2+) is required as a cofactor.

Its subcellular location is the cytoplasm. It catalyses the reaction tRNA(Thr) + L-threonine + ATP = L-threonyl-tRNA(Thr) + AMP + diphosphate + H(+). Functionally, catalyzes the attachment of threonine to tRNA(Thr) in a two-step reaction: L-threonine is first activated by ATP to form Thr-AMP and then transferred to the acceptor end of tRNA(Thr). Also edits incorrectly charged L-seryl-tRNA(Thr). The sequence is that of Threonine--tRNA ligase from Anaplasma marginale (strain Florida).